We begin with the raw amino-acid sequence, 383 residues long: tRNA-specific 2-thiouridylase MnmA (383 aa).

ATP is bound by residues 29–36 (GMSGGVDS) and Met-55. Positions 115-117 (NPD) are interaction with target base in tRNA. Residue Cys-120 is the Nucleophile of the active site. The cysteines at positions 120 and 217 are disulfide-linked. Gly-145 is an ATP binding site. The interval 167–169 (KDQ) is interaction with tRNA. Cys-217 (cysteine persulfide intermediate) is an active-site residue. Residues 329–330 (RY) form an interaction with tRNA region.

This sequence belongs to the MnmA/TRMU family.

It is found in the cytoplasm. The enzyme catalyses S-sulfanyl-L-cysteinyl-[protein] + uridine(34) in tRNA + AH2 + ATP = 2-thiouridine(34) in tRNA + L-cysteinyl-[protein] + A + AMP + diphosphate + H(+). In terms of biological role, catalyzes the 2-thiolation of uridine at the wobble position (U34) of tRNA, leading to the formation of s(2)U34. This chain is tRNA-specific 2-thiouridylase MnmA, found in Histophilus somni (strain 2336) (Haemophilus somnus).